Consider the following 209-residue polypeptide: Guanylate kinase (209 aa).

One can recognise a Guanylate kinase-like domain in the interval 7-185; it reads GNLYIVAAPS…AAMELQSIVI (179 aa). ATP is bound at residue 14-21; it reads APSGGGKT.

This sequence belongs to the guanylate kinase family.

It localises to the cytoplasm. It carries out the reaction GMP + ATP = GDP + ADP. In terms of biological role, essential for recycling GMP and indirectly, cGMP. The protein is Guanylate kinase of Legionella pneumophila (strain Lens).